The following is a 328-amino-acid chain: YDG domain-containing protein At5g47150 (328 aa).

One can recognise a YDG domain in the interval 176–320; that stretch reads GSVPGINIGD…KSVYKFKLCR (145 aa).

The protein localises to the nucleus. The polypeptide is YDG domain-containing protein At5g47150 (Arabidopsis thaliana (Mouse-ear cress)).